The sequence spans 533 residues: GDP-fucose protein O-fucosyltransferase 4 (533 aa).

Topologically, residues 1-20 are cytoplasmic; the sequence is MSAGCTQLVWGGRLHWGASH. Residues 21 to 37 traverse the membrane as a helical; Signal-anchor for type II membrane protein segment; that stretch reads LLSCLLALCALWVLAAA. Residues 38–533 are Lumenal-facing; it reads EPTEGGSANV…ETYIKRSMNH (496 aa). N-linked (GlcNAc...) asparagine glycans are attached at residues Asn148, Asn206, and Asn358. Cys429 and Cys432 are oxidised to a cystine. N-linked (GlcNAc...) asparagine glycosylation is present at Asn511.

Belongs to the glycosyltransferase 10 family.

It is found in the endoplasmic reticulum membrane. The enzyme catalyses L-threonyl-[protein] + GDP-beta-L-fucose = 3-O-(alpha-L-fucosyl)-L-threonyl-[protein] + GDP + H(+). It carries out the reaction L-seryl-[protein] + GDP-beta-L-fucose = 3-O-(alpha-L-fucosyl)-L-seryl-[protein] + GDP + H(+). It participates in protein modification; protein glycosylation. Its function is as follows. Protein O-fucosyltransferase that specifically catalyzes O-fucosylation of serine or threonine residues in EMI domains of target proteins. Attaches fucose through an O-glycosidic linkage. O-fucosylation of EMI domain-containing proteins may be required for facilitating protein folding and secretion. This is GDP-fucose protein O-fucosyltransferase 4 (fut11) from Xenopus tropicalis (Western clawed frog).